The sequence spans 468 residues: UDP-N-acetylmuramate--L-alanine ligase (468 aa).

Position 117–123 (117–123) interacts with ATP; that stretch reads GTHGKTT.

This sequence belongs to the MurCDEF family.

Its subcellular location is the cytoplasm. It catalyses the reaction UDP-N-acetyl-alpha-D-muramate + L-alanine + ATP = UDP-N-acetyl-alpha-D-muramoyl-L-alanine + ADP + phosphate + H(+). It participates in cell wall biogenesis; peptidoglycan biosynthesis. Functionally, cell wall formation. This Maricaulis maris (strain MCS10) (Caulobacter maris) protein is UDP-N-acetylmuramate--L-alanine ligase.